Consider the following 296-residue polypeptide: UDP-N-acetylenolpyruvoylglucosamine reductase (296 aa).

Residues 26-191 (RIGGPANYFK…LSATFRLSRN (166 aa)) form the FAD-binding PCMH-type domain. Arginine 170 is a catalytic residue. The Proton donor role is filled by cysteine 218. The active site involves glutamate 287.

The protein belongs to the MurB family. FAD is required as a cofactor.

It localises to the cytoplasm. The enzyme catalyses UDP-N-acetyl-alpha-D-muramate + NADP(+) = UDP-N-acetyl-3-O-(1-carboxyvinyl)-alpha-D-glucosamine + NADPH + H(+). It participates in cell wall biogenesis; peptidoglycan biosynthesis. Its function is as follows. Cell wall formation. The chain is UDP-N-acetylenolpyruvoylglucosamine reductase from Chlamydia abortus (strain DSM 27085 / S26/3) (Chlamydophila abortus).